Consider the following 371-residue polypeptide: Putative glutamate--cysteine ligase 2 (371 aa).

The protein belongs to the glutamate--cysteine ligase type 2 family. YbdK subfamily.

The catalysed reaction is L-cysteine + L-glutamate + ATP = gamma-L-glutamyl-L-cysteine + ADP + phosphate + H(+). Functionally, ATP-dependent carboxylate-amine ligase which exhibits weak glutamate--cysteine ligase activity. This Cupriavidus pinatubonensis (strain JMP 134 / LMG 1197) (Cupriavidus necator (strain JMP 134)) protein is Putative glutamate--cysteine ligase 2.